The following is a 312-amino-acid chain: Olfactory receptor 51A7 (312 aa).

The Extracellular segment spans residues Met1–Ile25. Asn5 is a glycosylation site (N-linked (GlcNAc...) asparagine). The helical transmembrane segment at Trp26–Leu46 threads the bilayer. At Phe47–Ser54 the chain is on the cytoplasmic side. Residues Leu55–Leu75 form a helical membrane-spanning segment. Over Ser76–Ala99 the chain is Extracellular. A disulfide bond links Cys97 and Cys189. Residues Gln100–Leu120 traverse the membrane as a helical segment. The Cytoplasmic segment spans residues Asp121–Asn139. Residues Arg140–Pro160 traverse the membrane as a helical segment. At Phe161–Val196 the chain is on the extracellular side. An N-linked (GlcNAc...) asparagine glycan is attached at Asn192. A helical transmembrane segment spans residues Ile197–Ser216. The Cytoplasmic segment spans residues Tyr217–Ala236. A helical membrane pass occupies residues Leu237–Leu257. Residues Ala258–Val272 are Extracellular-facing. Residues Ile273–Val293 form a helical membrane-spanning segment. The Cytoplasmic portion of the chain corresponds to Lys294–Arg312.

Belongs to the G-protein coupled receptor 1 family.

Its subcellular location is the cell membrane. Odorant receptor. The chain is Olfactory receptor 51A7 (OR51A7) from Homo sapiens (Human).